The following is a 370-amino-acid chain: Aminomethyltransferase (370 aa).

This sequence belongs to the GcvT family. The glycine cleavage system is composed of four proteins: P, T, L and H.

It carries out the reaction N(6)-[(R)-S(8)-aminomethyldihydrolipoyl]-L-lysyl-[protein] + (6S)-5,6,7,8-tetrahydrofolate = N(6)-[(R)-dihydrolipoyl]-L-lysyl-[protein] + (6R)-5,10-methylene-5,6,7,8-tetrahydrofolate + NH4(+). Functionally, the glycine cleavage system catalyzes the degradation of glycine. The protein is Aminomethyltransferase of Stenotrophomonas maltophilia (strain K279a).